We begin with the raw amino-acid sequence, 206 residues long: Large ribosomal subunit protein eL8 (206 aa).

This sequence belongs to the eukaryotic ribosomal protein eL8 family. Component of the large ribosomal subunit.

The protein localises to the cytoplasm. This is Large ribosomal subunit protein eL8 (RPL7A) from Encephalitozoon cuniculi (strain GB-M1) (Microsporidian parasite).